A 71-amino-acid chain; its full sequence is Large ribosomal subunit protein bL31 (71 aa).

4 residues coordinate Zn(2+): cysteine 16, cysteine 18, cysteine 37, and cysteine 40.

It belongs to the bacterial ribosomal protein bL31 family. Type A subfamily. Part of the 50S ribosomal subunit. The cofactor is Zn(2+).

Functionally, binds the 23S rRNA. In Mannheimia succiniciproducens (strain KCTC 0769BP / MBEL55E), this protein is Large ribosomal subunit protein bL31.